A 332-amino-acid chain; its full sequence is uncharacterized protein (332 aa).

The helical transmembrane segment at methionine 185 to isoleucine 205 threads the bilayer.

It is found in the host membrane. This is an uncharacterized protein from Sulfolobus islandicus filamentous virus (isolate Iceland/Hveragerdi) (SIFV).